Here is a 346-residue protein sequence, read N- to C-terminus: NADH-ubiquinone oxidoreductase chain 2 (346 aa).

11 consecutive transmembrane segments (helical) span residues 1–21 (MNPHAKLISLISLLLGTTITI), 25–45 (HWIMAWTGLEINTLAIIPLIS), 60–80 (FLVQAAASALVLFSSMSNAWA), 96–116 (MLLTAAIAIKLGLVPFHFWFP), 124–144 (LTTALLLSTLMKLPPMAILLM), 149–169 (LNPTVLTSMALASAALGGWMG), 178–198 (ILAFSSIAHLGWMTMIIIYNP), 200–220 (LTLLTFYLYILMTATVFLSLN), 242–262 (AALMLTLLSLAGLPPLTGFMP), 274–294 (EMTTVATIIALLSLLGLFFYL), and 325–345 (IAILSSLSAILLPISPMILAA).

This sequence belongs to the complex I subunit 2 family.

The protein resides in the mitochondrion inner membrane. It catalyses the reaction a ubiquinone + NADH + 5 H(+)(in) = a ubiquinol + NAD(+) + 4 H(+)(out). In terms of biological role, core subunit of the mitochondrial membrane respiratory chain NADH dehydrogenase (Complex I) that is believed to belong to the minimal assembly required for catalysis. Complex I functions in the transfer of electrons from NADH to the respiratory chain. The immediate electron acceptor for the enzyme is believed to be ubiquinone. The sequence is that of NADH-ubiquinone oxidoreductase chain 2 (MT-ND2) from Struthio camelus (Common ostrich).